Reading from the N-terminus, the 126-residue chain is SNRPMPLNIYQFKNMIQCTVPSRSWWDFADYGCYCGRGGSGTPVDDLDRCCQVHDNCYNQAQEITGCRPKWKTYTYECSQGTLTCKGRNNACAATVCDCDRLAAICFAGAPYNDNNYNIDLKARCQ.

A signal peptide is located at residue serine 1. Positions 2 to 7 (NRPMPL) are excised as a propeptide. 7 cysteine pairs are disulfide-bonded: cysteine 18–cysteine 78, cysteine 33–cysteine 125, cysteine 35–cysteine 51, cysteine 50–cysteine 106, cysteine 57–cysteine 99, cysteine 67–cysteine 92, and cysteine 85–cysteine 97. Residues tyrosine 34, glycine 36, and glycine 38 each coordinate Ca(2+). Histidine 54 is an active-site residue. Aspartate 55 is a binding site for Ca(2+). Residue aspartate 100 is part of the active site.

It belongs to the phospholipase A2 family. Group I subfamily. D49 sub-subfamily. Monomer. Ca(2+) serves as cofactor. Expressed by the venom gland.

The protein localises to the secreted. The catalysed reaction is a 1,2-diacyl-sn-glycero-3-phosphocholine + H2O = a 1-acyl-sn-glycero-3-phosphocholine + a fatty acid + H(+). Its function is as follows. Snake venom phospholipase A2 (PLA2) that exhibits strong anticoagulant activity, which is not due to the catalytic activity. PLA2 catalyzes the calcium-dependent hydrolysis of the 2-acyl groups in 3-sn-phosphoglycerides. The protein is Acidic phospholipase A2 4 of Naja sagittifera (Andaman cobra).